We begin with the raw amino-acid sequence, 481 residues long: Aspartyl/glutamyl-tRNA(Asn/Gln) amidotransferase subunit B (481 aa).

It belongs to the GatB/GatE family. GatB subfamily. As to quaternary structure, heterotrimer of A, B and C subunits.

The enzyme catalyses L-glutamyl-tRNA(Gln) + L-glutamine + ATP + H2O = L-glutaminyl-tRNA(Gln) + L-glutamate + ADP + phosphate + H(+). The catalysed reaction is L-aspartyl-tRNA(Asn) + L-glutamine + ATP + H2O = L-asparaginyl-tRNA(Asn) + L-glutamate + ADP + phosphate + 2 H(+). Its function is as follows. Allows the formation of correctly charged Asn-tRNA(Asn) or Gln-tRNA(Gln) through the transamidation of misacylated Asp-tRNA(Asn) or Glu-tRNA(Gln) in organisms which lack either or both of asparaginyl-tRNA or glutaminyl-tRNA synthetases. The reaction takes place in the presence of glutamine and ATP through an activated phospho-Asp-tRNA(Asn) or phospho-Glu-tRNA(Gln). The chain is Aspartyl/glutamyl-tRNA(Asn/Gln) amidotransferase subunit B from Pseudomonas putida (strain ATCC 700007 / DSM 6899 / JCM 31910 / BCRC 17059 / LMG 24140 / F1).